A 75-amino-acid chain; its full sequence is Small ribosomal subunit protein bS18 (75 aa).

The protein belongs to the bacterial ribosomal protein bS18 family. In terms of assembly, part of the 30S ribosomal subunit. Forms a tight heterodimer with protein bS6.

Binds as a heterodimer with protein bS6 to the central domain of the 16S rRNA, where it helps stabilize the platform of the 30S subunit. The protein is Small ribosomal subunit protein bS18 of Hydrogenovibrio crunogenus (strain DSM 25203 / XCL-2) (Thiomicrospira crunogena).